The sequence spans 436 residues: UPF0597 protein YhaM (436 aa).

This sequence belongs to the UPF0597 family.

In Escherichia coli (strain K12 / MC4100 / BW2952), this protein is UPF0597 protein YhaM.